The following is a 227-amino-acid chain: MMLHIPGVLTKEQVAQCRDILDAADWTDGNATSGAQSALAKRNRQLPEGSPAARAAGDAIQDALACNALFFSAALPLKVFPPLFNRYAGGDAFGTHVDNAIRLLRGTDFRVRSDLSATLFLEEPEHYDGGELCVEDTYGVHRAKLPAGDMVLYPASSLHHVTPVTRGARVASFFWIQSMVRDDADRTLLYQLDTQIQRLTAEKGGRDASVIALTGIYHNLLRRWADA.

Positions 78–178 constitute a Fe2OG dioxygenase domain; the sequence is KVFPPLFNRY…RVASFFWIQS (101 aa). Residues histidine 96, aspartate 98, and histidine 159 each coordinate Fe cation. Arginine 169 serves as a coordination point for 2-oxoglutarate.

Fe(2+) serves as cofactor. Requires L-ascorbate as cofactor.

In Burkholderia pseudomallei (strain K96243), this protein is PKHD-type hydroxylase BPSS1206.